Consider the following 197-residue polypeptide: Phosphoheptose isomerase (197 aa).

Residues M34 to P192 form the SIS domain. Substrate contacts are provided by residues N49–G51, Q62, N91–D92, S122, and H172. Q62 contributes to the Zn(2+) binding site. H172 and H180 together coordinate Zn(2+).

The protein belongs to the SIS family. GmhA subfamily. Homotetramer. The cofactor is Zn(2+).

Its subcellular location is the cytoplasm. The catalysed reaction is 2 D-sedoheptulose 7-phosphate = D-glycero-alpha-D-manno-heptose 7-phosphate + D-glycero-beta-D-manno-heptose 7-phosphate. It functions in the pathway carbohydrate biosynthesis; D-glycero-D-manno-heptose 7-phosphate biosynthesis; D-glycero-alpha-D-manno-heptose 7-phosphate and D-glycero-beta-D-manno-heptose 7-phosphate from sedoheptulose 7-phosphate: step 1/1. In terms of biological role, catalyzes the isomerization of sedoheptulose 7-phosphate in D-glycero-D-manno-heptose 7-phosphate. The polypeptide is Phosphoheptose isomerase (Pseudoalteromonas atlantica (strain T6c / ATCC BAA-1087)).